The primary structure comprises 242 residues: Lactate utilization protein A 2 (242 aa).

The protein belongs to the LutA/YkgE family.

Its function is as follows. Is involved in L-lactate degradation and allows cells to grow with lactate as the sole carbon source. This Bacillus cereus (strain Q1) protein is Lactate utilization protein A 2.